The chain runs to 341 residues: Glycerol-1-phosphate dehydrogenase [NAD(P)+] (341 aa).

NAD(+) contacts are provided by residues 81 to 85 (GKAID) and 103 to 106 (TTAS). Substrate is bound at residue aspartate 108. Serine 112 is a binding site for NAD(+). Aspartate 151 provides a ligand contact to substrate. Zn(2+) is bound by residues aspartate 151 and histidine 232. Residue histidine 236 participates in substrate binding. Zn(2+) is bound at residue histidine 253.

Belongs to the glycerol-1-phosphate dehydrogenase family. Requires Zn(2+) as cofactor.

Its subcellular location is the cytoplasm. The catalysed reaction is sn-glycerol 1-phosphate + NAD(+) = dihydroxyacetone phosphate + NADH + H(+). It carries out the reaction sn-glycerol 1-phosphate + NADP(+) = dihydroxyacetone phosphate + NADPH + H(+). It functions in the pathway membrane lipid metabolism; glycerophospholipid metabolism. Catalyzes the NAD(P)H-dependent reduction of dihydroxyacetonephosphate (DHAP or glycerone phosphate) to glycerol 1-phosphate (G1P). The G1P thus generated is used as the glycerophosphate backbone of phospholipids in the cellular membranes of Archaea. This is Glycerol-1-phosphate dehydrogenase [NAD(P)+] from Methanococcus aeolicus (strain ATCC BAA-1280 / DSM 17508 / OCM 812 / Nankai-3).